The primary structure comprises 461 residues: L-cystine uptake protein TcyP (461 aa).

10 helical membrane passes run 1–21 (MTLF…LLYM), 33–53 (VFTA…IYGS), 72–92 (YVKL…LGAF), 104–124 (ISGL…AVGI), 183–203 (PTST…YLGV), 224–244 (IIMR…LAIM), 262–282 (FVIA…LLIT), 337–357 (LSIG…IMIA), 369–389 (FLFT…GVGG), and 393–413 (FAAL…GLLI).

It belongs to the dicarboxylate/amino acid:cation symporter (DAACS) (TC 2.A.23) family.

It localises to the membrane. Functionally, mediates uptake of L-cystine, the oxidized form of L-cysteine. This is L-cystine uptake protein TcyP (tcyP) from Bacillus licheniformis (strain ATCC 14580 / DSM 13 / JCM 2505 / CCUG 7422 / NBRC 12200 / NCIMB 9375 / NCTC 10341 / NRRL NRS-1264 / Gibson 46).